A 419-amino-acid polypeptide reads, in one-letter code: Squalene synthase R6 (419 aa).

Residues 397 to 417 form a helical membrane-spanning segment; the sequence is TMYLVVLLLGILGVAAAVLMA.

Belongs to the phytoene/squalene synthase family. Mg(2+) is required as a cofactor.

Its subcellular location is the membrane. It catalyses the reaction 2 (2E,6E)-farnesyl diphosphate + NADPH + H(+) = squalene + 2 diphosphate + NADP(+). The enzyme catalyses 2 (2E,6E)-farnesyl diphosphate + NADH + H(+) = squalene + 2 diphosphate + NAD(+). It functions in the pathway terpene metabolism; lanosterol biosynthesis; lanosterol from farnesyl diphosphate: step 1/3. Squalene synthase; part of the gene cluster that mediates the biosynthesis of squalestatin S1 (SQS1, also known as zaragozic acid A), a heavily oxidized fungal polyketide that offers potent cholesterol lowering activity by targeting squalene synthase (SS). Catalyzes the condensation of 2 two farnesyl pyrophosphate moieties to form squalene. The presence of a gene encoding a squalene synthase supports the identification of the cluster as being responsible for SQS1 production and suggests a likely mechanism for self-resistance. This Phoma sp. (strain ATCC 20986 / MF5453) protein is Squalene synthase R6.